We begin with the raw amino-acid sequence, 293 residues long: MQPFKTIGLIGRLGSPNAVETLKRLLRFLGTRELDVIVDERTATVLLNHGYPEASRSRLGELCDLVIVVGGDGSLLSAARVLCQTQTPVLGVNRGRLGFLTDISPDDVEERIGEVLDGHFESEQRFLLEAEVFRAGKQVGTASGLNDVVIHPGKAARMIEFELFIDGQFVYSQRSDGLIIATPTGSTAYALSGGGPIVHPRLEAITLVPMFPHTLSSRPIVVDAASEVTIHIGETNQAYPHVSCDGQTQVVSKPGDIMVVRRKRERLTLIHPRGHNYFETCRTKLGWSSRLGE.

Residue D72 is the Proton acceptor of the active site. NAD(+)-binding positions include 72 to 73 (DG), 146 to 147 (ND), R157, R174, D176, 187 to 192 (TAYALS), and Q247.

This sequence belongs to the NAD kinase family. Requires a divalent metal cation as cofactor.

The protein localises to the cytoplasm. It catalyses the reaction NAD(+) + ATP = ADP + NADP(+) + H(+). Involved in the regulation of the intracellular balance of NAD and NADP, and is a key enzyme in the biosynthesis of NADP. Catalyzes specifically the phosphorylation on 2'-hydroxyl of the adenosine moiety of NAD to yield NADP. The polypeptide is NAD kinase (Chromohalobacter salexigens (strain ATCC BAA-138 / DSM 3043 / CIP 106854 / NCIMB 13768 / 1H11)).